Here is an 85-residue protein sequence, read N- to C-terminus: Small ribosomal subunit protein uS17 (85 aa).

Belongs to the universal ribosomal protein uS17 family. As to quaternary structure, part of the 30S ribosomal subunit.

In terms of biological role, one of the primary rRNA binding proteins, it binds specifically to the 5'-end of 16S ribosomal RNA. The protein is Small ribosomal subunit protein uS17 of Agathobacter rectalis (strain ATCC 33656 / DSM 3377 / JCM 17463 / KCTC 5835 / VPI 0990) (Eubacterium rectale).